We begin with the raw amino-acid sequence, 25 residues long: Omega-conotoxin MVIIB (25 aa).

Disulfide bonds link Cys1/Cys16, Cys8/Cys20, and Cys15/Cys25. Cys25 carries the cysteine amide modification.

Belongs to the conotoxin O1 superfamily. In terms of tissue distribution, expressed by the venom duct.

It localises to the secreted. Functionally, omega-conotoxins act at presynaptic membranes, they bind and block voltage-gated calcium channels (Cav). The protein is Omega-conotoxin MVIIB of Conus magus (Magical cone).